We begin with the raw amino-acid sequence, 309 residues long: Pantoate--beta-alanine ligase (309 aa).

The protein belongs to the pantothenate synthetase family.

The protein resides in the cytoplasm. Its subcellular location is the nucleus. It carries out the reaction (R)-pantoate + beta-alanine + ATP = (R)-pantothenate + AMP + diphosphate + H(+). Its pathway is cofactor biosynthesis; (R)-pantothenate biosynthesis; (R)-pantothenate from (R)-pantoate and beta-alanine: step 1/1. In terms of biological role, required for pantothenic acid biosynthesis. The chain is Pantoate--beta-alanine ligase (PAN6) from Saccharomyces cerevisiae (strain ATCC 204508 / S288c) (Baker's yeast).